A 446-amino-acid polypeptide reads, in one-letter code: Minor fimbrium tip subunit Mfa3 (446 aa).

A signal peptide spans 1–20; it reads MMQLKKRYFALILLLFLWSG. C21 carries the N-palmitoyl cysteine lipid modification. Residue C21 is the site of S-diacylglycerol cysteine attachment. A propeptide spanning residues 21–43 is cleaved from the precursor; the sequence is CDRGVDPQPDPLQPDVYLLVNAR.

Belongs to the bacteroidetes fimbrillin superfamily. FimB/Mfa2 family. In terms of assembly, component of the fimbrium tip. Minor fimbriae are composed of a structural subunit, most often Mfa1, and the accessory subunits Mfa3, Mfa4 and Mfa5. Fimbrium assembly occurs by linear, head-to-tail oligomerization of fimbrial subunits. This is mediated via insertion of a C-terminal beta-strand from one subunit into a groove in the N-terminal domain of the following subunit. Mfa3 is required for Mfa4 and Mfa5 insertion into the fimbrium.

Its subcellular location is the fimbrium. The protein localises to the cell outer membrane. In terms of biological role, tip subunit of the minor fimbriae. These filamentous pili are attached to the cell surface; they mediate biofilm formation, adhesion onto host cells and onto other bacteria that are part of the oral microbiome. They play an important role in invasion of periodontal tissues and are recognized as major virulence factors. Fimbrium subunits from different strains have highly divergent sequences, and this correlates with pathogenicity. The polypeptide is Minor fimbrium tip subunit Mfa3 (mfa3) (Porphyromonas gingivalis (strain ATCC 33277 / DSM 20709 / CIP 103683 / JCM 12257 / NCTC 11834 / 2561)).